A 473-amino-acid polypeptide reads, in one-letter code: Bifunctional protein HldE (473 aa).

The ribokinase stretch occupies residues Met-1–Ile-317. Asn-195 to Glu-198 is a binding site for ATP. Asp-264 is an active-site residue. The interval Met-343–Asn-473 is cytidylyltransferase.

It in the N-terminal section; belongs to the carbohydrate kinase PfkB family. In the C-terminal section; belongs to the cytidylyltransferase family. As to quaternary structure, homodimer.

It catalyses the reaction D-glycero-beta-D-manno-heptose 7-phosphate + ATP = D-glycero-beta-D-manno-heptose 1,7-bisphosphate + ADP + H(+). It carries out the reaction D-glycero-beta-D-manno-heptose 1-phosphate + ATP + H(+) = ADP-D-glycero-beta-D-manno-heptose + diphosphate. The protein operates within nucleotide-sugar biosynthesis; ADP-L-glycero-beta-D-manno-heptose biosynthesis; ADP-L-glycero-beta-D-manno-heptose from D-glycero-beta-D-manno-heptose 7-phosphate: step 1/4. It participates in nucleotide-sugar biosynthesis; ADP-L-glycero-beta-D-manno-heptose biosynthesis; ADP-L-glycero-beta-D-manno-heptose from D-glycero-beta-D-manno-heptose 7-phosphate: step 3/4. Its function is as follows. Catalyzes the phosphorylation of D-glycero-D-manno-heptose 7-phosphate at the C-1 position to selectively form D-glycero-beta-D-manno-heptose-1,7-bisphosphate. Catalyzes the ADP transfer from ATP to D-glycero-beta-D-manno-heptose 1-phosphate, yielding ADP-D-glycero-beta-D-manno-heptose. This Nitrosococcus oceani (strain ATCC 19707 / BCRC 17464 / JCM 30415 / NCIMB 11848 / C-107) protein is Bifunctional protein HldE.